The primary structure comprises 47 residues: Short neurotoxin D2A (47 aa).

2 cysteine pairs are disulfide-bonded: cysteine 3–cysteine 24 and cysteine 17–cysteine 39.

As to expression, expressed by the venom gland.

It localises to the secreted. In Micrurus pyrrhocryptus (Coral snake), this protein is Short neurotoxin D2A.